Reading from the N-terminus, the 184-residue chain is dCTP deaminase (184 aa).

107–112 (KSTYAR) contacts dCTP. The Proton donor/acceptor role is filled by Glu133. DCTP contacts are provided by Gln152, Tyr166, and Gln176.

Belongs to the dCTP deaminase family. Homotrimer.

The enzyme catalyses dCTP + H2O + H(+) = dUTP + NH4(+). The protein operates within pyrimidine metabolism; dUMP biosynthesis; dUMP from dCTP (dUTP route): step 1/2. Functionally, catalyzes the deamination of dCTP to dUTP. The sequence is that of dCTP deaminase from Granulibacter bethesdensis (strain ATCC BAA-1260 / CGDNIH1).